Reading from the N-terminus, the 20-residue chain is Fibrinolytic zinc metalloproteinase (20 aa).

The Peptidase M12B domain occupies 7-20; that stretch reads RYVQLVITVDHVMN.

The cofactor is Zn(2+).

The protein resides in the secreted. Hydrolyzes alpha and beta chains of human fibrinogen and human fibrin. No activity against the gamma chain of human fibrinogen, human thrombin, bovine serum albumin, ovalbumin and hemoglobin. Has anticoagulant activity on human plasma and protects mice against death due from experimentally induced platelet thromboembolism with an ED(50) of 40 ug/kg. This is Fibrinolytic zinc metalloproteinase from Ganoderma lucidum (Ling zhi medicinal fungus).